Here is a 197-residue protein sequence, read N- to C-terminus: Imidazoleglycerol-phosphate dehydratase (197 aa).

It belongs to the imidazoleglycerol-phosphate dehydratase family.

The protein resides in the cytoplasm. It catalyses the reaction D-erythro-1-(imidazol-4-yl)glycerol 3-phosphate = 3-(imidazol-4-yl)-2-oxopropyl phosphate + H2O. Its pathway is amino-acid biosynthesis; L-histidine biosynthesis; L-histidine from 5-phospho-alpha-D-ribose 1-diphosphate: step 6/9. This is Imidazoleglycerol-phosphate dehydratase from Azotobacter vinelandii (strain DJ / ATCC BAA-1303).